Consider the following 176-residue polypeptide: Putative ribosomal protein eS10-like (176 aa).

The interval 104–176 (TLHRSRPETG…CGRGRGQPPQ (73 aa)) is disordered. Over residues 108-139 (SRPETGRPRPKGLEGKRPARLTRREADRDTYR) the composition is skewed to basic and acidic residues.

It belongs to the eukaryotic ribosomal protein eS10 family.

The polypeptide is Putative ribosomal protein eS10-like (RPS10P5) (Homo sapiens (Human)).